A 1349-amino-acid chain; its full sequence is Membrane-associated phosphatidylinositol transfer protein 2 (1349 aa).

The tract at residues 262–344 (EDGEEATELV…RDSDESSDDE (83 aa)) is disordered. Over residues 302–322 (KQWSTSSKSSRSSKRGASPSR) the composition is skewed to low complexity. Phosphoserine is present on residues Ser-337, Ser-341, Ser-368, and Ser-589. Gly residues predominate over residues 618-631 (GGGGGSSGGGGSSG). A disordered region spans residues 618–671 (GGGGGSSGGGGSSGGSSLESSRHLSRSNVDIPRSNGTEDPKRQLPRKRSDSSTY). Ser-644 bears the Phosphoserine mark. Residues 653 to 667 (GTEDPKRQLPRKRSD) are compositionally biased toward basic and acidic residues. Phosphoserine is present on residues Ser-700, Ser-701, and Ser-702. The DDHD domain occupies 715-963 (FDFEITDLFL…VSFLLRQVMR (249 aa)). The residue at position 828 (Arg-828) is an Omega-N-methylarginine. The segment at 876–900 (LPAPSPTTPGPHPPARKASPGLERA) is disordered. A compositionally biased stretch (pro residues) spans 878–888 (APSPTTPGPHP). Ser-1277 is subject to Phosphoserine. Positions 1296–1326 (TISAQPSGPSHRHERTQSQADGEQRGQRSMS) are disordered.

The protein belongs to the PtdIns transfer protein family. PI transfer class IIA subfamily. As to quaternary structure, interacts with PTK2B via its C-terminus. Interacts with CPNE4 (via VWFA domain). In terms of tissue distribution, highly expressed in brain, heart, ovary, testis and thymus. Detected in small intestine, prostate, pancreas, skeletal muscle, liver, colon and placenta.

It localises to the endomembrane system. Functionally, catalyzes the transfer of phosphatidylinositol and phosphatidylcholine between membranes (in vitro). Binds calcium ions. The chain is Membrane-associated phosphatidylinositol transfer protein 2 (PITPNM2) from Homo sapiens (Human).